The following is a 217-amino-acid chain: Adenylate kinase (217 aa).

Residue 10 to 15 participates in ATP binding; sequence GSGKGT. The segment at 30–59 is NMP; sequence STGDLLRAAVAAGSELGKQAKAAMDAGELV. AMP is bound by residues Thr-31, Arg-36, 57 to 59, 85 to 88, and Gln-92; these read ELV and GFPR. The LID stretch occupies residues 126–164; that stretch reads GRRTCQACGAIYNIYFSPPEVDHRCDKCNSDQLVQRSDD. Position 127 (Arg-127) interacts with ATP. 2 residues coordinate Zn(2+): Cys-130 and Cys-133. 136–137 is a binding site for ATP; that stretch reads IY. Residues Cys-150 and Cys-153 each contribute to the Zn(2+) site. Positions 161 and 172 each coordinate AMP. Asp-200 contributes to the ATP binding site.

The protein belongs to the adenylate kinase family. As to quaternary structure, monomer.

It is found in the cytoplasm. The enzyme catalyses AMP + ATP = 2 ADP. It functions in the pathway purine metabolism; AMP biosynthesis via salvage pathway; AMP from ADP: step 1/1. Functionally, catalyzes the reversible transfer of the terminal phosphate group between ATP and AMP. Plays an important role in cellular energy homeostasis and in adenine nucleotide metabolism. This Nitrosococcus oceani (strain ATCC 19707 / BCRC 17464 / JCM 30415 / NCIMB 11848 / C-107) protein is Adenylate kinase.